A 122-amino-acid chain; its full sequence is S-adenosylmethionine decarboxylase proenzyme (122 aa).

Serine 63 (schiff-base intermediate with substrate; via pyruvic acid) is an active-site residue. Residue serine 63 is modified to Pyruvic acid (Ser); by autocatalysis. The Proton acceptor; for processing activity role is filled by histidine 68. Cysteine 83 acts as the Proton donor; for catalytic activity in catalysis.

This sequence belongs to the prokaryotic AdoMetDC family. Type 1 subfamily. As to quaternary structure, heterotetramer of two alpha and two beta chains arranged as a dimer of alpha/beta heterodimers. Requires pyruvate as cofactor. Is synthesized initially as an inactive proenzyme. Formation of the active enzyme involves a self-maturation process in which the active site pyruvoyl group is generated from an internal serine residue via an autocatalytic post-translational modification. Two non-identical subunits are generated from the proenzyme in this reaction, and the pyruvate is formed at the N-terminus of the alpha chain, which is derived from the carboxyl end of the proenzyme. The post-translation cleavage follows an unusual pathway, termed non-hydrolytic serinolysis, in which the side chain hydroxyl group of the serine supplies its oxygen atom to form the C-terminus of the beta chain, while the remainder of the serine residue undergoes an oxidative deamination to produce ammonia and the pyruvoyl group blocking the N-terminus of the alpha chain.

It carries out the reaction S-adenosyl-L-methionine + H(+) = S-adenosyl 3-(methylsulfanyl)propylamine + CO2. Its pathway is amine and polyamine biosynthesis; S-adenosylmethioninamine biosynthesis; S-adenosylmethioninamine from S-adenosyl-L-methionine: step 1/1. Its function is as follows. Catalyzes the decarboxylation of S-adenosylmethionine to S-adenosylmethioninamine (dcAdoMet), the propylamine donor required for the synthesis of the polyamines spermine and spermidine from the diamine putrescine. The polypeptide is S-adenosylmethionine decarboxylase proenzyme (Methanococcus maripaludis (strain DSM 14266 / JCM 13030 / NBRC 101832 / S2 / LL)).